A 329-amino-acid chain; its full sequence is GTP 3',8-cyclase (329 aa).

In terms of domain architecture, Radical SAM core spans 8-234; that stretch reads AFARKFYYLR…QLRQRSDGPA (227 aa). Arg-17 is a GTP binding site. Residues Cys-24 and Cys-28 each coordinate [4Fe-4S] cluster. Tyr-30 serves as a coordination point for S-adenosyl-L-methionine. Cys-31 contributes to the [4Fe-4S] cluster binding site. Residue Arg-68 participates in GTP binding. Residue Gly-72 participates in S-adenosyl-L-methionine binding. Thr-99 provides a ligand contact to GTP. Ser-123 is a binding site for S-adenosyl-L-methionine. A GTP-binding site is contributed by Lys-160. S-adenosyl-L-methionine is bound at residue Met-194. The [4Fe-4S] cluster site is built by Cys-257 and Cys-260. 262–264 serves as a coordination point for GTP; the sequence is RLR. Cys-274 serves as a coordination point for [4Fe-4S] cluster.

Belongs to the radical SAM superfamily. MoaA family. Monomer and homodimer. Requires [4Fe-4S] cluster as cofactor.

The catalysed reaction is GTP + AH2 + S-adenosyl-L-methionine = (8S)-3',8-cyclo-7,8-dihydroguanosine 5'-triphosphate + 5'-deoxyadenosine + L-methionine + A + H(+). The protein operates within cofactor biosynthesis; molybdopterin biosynthesis. Its function is as follows. Catalyzes the cyclization of GTP to (8S)-3',8-cyclo-7,8-dihydroguanosine 5'-triphosphate. This Escherichia coli O7:K1 (strain IAI39 / ExPEC) protein is GTP 3',8-cyclase.